A 427-amino-acid polypeptide reads, in one-letter code: Adenylosuccinate synthetase (427 aa).

GTP contacts are provided by residues Gly12–Lys18 and Gly40–Thr42. Asp13 acts as the Proton acceptor in catalysis. Mg(2+) is bound by residues Asp13 and Gly40. Residues Asp13–Lys16, Asn38–His41, Thr131, Arg145, Gln226, Thr241, and Arg305 each bind IMP. His41 serves as the catalytic Proton donor. A substrate-binding site is contributed by Ala301–Arg307. Residues Arg307, Lys333–Asp335, and Ser415–Gly417 each bind GTP.

It belongs to the adenylosuccinate synthetase family. Homodimer. It depends on Mg(2+) as a cofactor.

It localises to the cytoplasm. It catalyses the reaction IMP + L-aspartate + GTP = N(6)-(1,2-dicarboxyethyl)-AMP + GDP + phosphate + 2 H(+). It functions in the pathway purine metabolism; AMP biosynthesis via de novo pathway; AMP from IMP: step 1/2. Plays an important role in the de novo pathway of purine nucleotide biosynthesis. Catalyzes the first committed step in the biosynthesis of AMP from IMP. This is Adenylosuccinate synthetase from Oleidesulfovibrio alaskensis (strain ATCC BAA-1058 / DSM 17464 / G20) (Desulfovibrio alaskensis).